We begin with the raw amino-acid sequence, 579 residues long: Thiol:disulfide interchange protein DsbD (579 aa).

The N-terminal stretch at 1-16 (MKKLFLFFTLIFTAFA) is a signal peptide. 2 disulfides stabilise this stretch: Cys124/Cys129 and Cys193/Cys315. 8 helical membrane passes run 178–198 (IFGFFLLGLGLAFTPCVLPML), 230–250 (LTYTLLGLAVAAIGLPFQIAL), 254–274 (YVMIGLSILFVALALSMFGLF), 296–316 (GAFGGAFAMGMIAGLVASPCT), 337–357 (AATLYLLALGMGVPLMLITLF), 376–396 (FGFVMLALPVFLLSRILPEVW), 397–417 (EPRLWAGLATVFFIWFALQMS), and 420–440 (GFGYAIKIISFALAMVTVQPL). In terms of domain architecture, Thioredoxin spans 449–579 (TTTQSAVENM…AFSNWLKALH (131 aa)). Cys495 and Cys498 are joined by a disulfide.

This sequence belongs to the thioredoxin family. DsbD subfamily.

The protein resides in the cell inner membrane. The enzyme catalyses [protein]-dithiol + NAD(+) = [protein]-disulfide + NADH + H(+). The catalysed reaction is [protein]-dithiol + NADP(+) = [protein]-disulfide + NADPH + H(+). Its function is as follows. Required to facilitate the formation of correct disulfide bonds in some periplasmic proteins and for the assembly of the periplasmic c-type cytochromes. Acts by transferring electrons from cytoplasmic thioredoxin to the periplasm. This transfer involves a cascade of disulfide bond formation and reduction steps. The sequence is that of Thiol:disulfide interchange protein DsbD from Haemophilus influenzae (strain 86-028NP).